We begin with the raw amino-acid sequence, 196 residues long: Imidazoleglycerol-phosphate dehydratase (196 aa).

It belongs to the imidazoleglycerol-phosphate dehydratase family.

Its subcellular location is the cytoplasm. It catalyses the reaction D-erythro-1-(imidazol-4-yl)glycerol 3-phosphate = 3-(imidazol-4-yl)-2-oxopropyl phosphate + H2O. It functions in the pathway amino-acid biosynthesis; L-histidine biosynthesis; L-histidine from 5-phospho-alpha-D-ribose 1-diphosphate: step 6/9. The sequence is that of Imidazoleglycerol-phosphate dehydratase from Ralstonia nicotianae (strain ATCC BAA-1114 / GMI1000) (Ralstonia solanacearum).